The sequence spans 265 residues: MIPMHVAVIMDGNGRWARKQLQERTFGHEQGVSVLESIVDECINCGIRFLTVYAFSTENWSRPPTEVSFLFELLSAAIQRVRTTYRERNVKVQFCGERTTQIPETVIAAMNCIEQDTAACTGLILSVCFNYGGHTEIAQACRSVLADCLEGDAVENIKTRLQMPIEQFIQQIDTHLYANLPPVDLLIRTGCEKRLSNFLPWHLAYAEIIFSDLLWPEFSVRAFKDCLDEFASRTRRFGGVQLSPMTGVYSDTHPHSSTNALSNHD.

The RXG motif; crucial for prenyltransferase activity motif lies at 236 to 238 (RFG).

It belongs to the UPP synthase family. Requires Mg(2+) as cofactor.

The enzyme catalyses 8 isopentenyl diphosphate + (2E,6E)-farnesyl diphosphate = di-trans,octa-cis-undecaprenyl diphosphate + 8 diphosphate. It participates in protein modification; protein glycosylation. Its pathway is lipid metabolism. Its function is as follows. Cis-prenyl transferase involved in the synthesis of dolichol, a long-chain polyprenol that is utilized as a sugar carrier in protein glycosylation in the endoplasmic reticulum (ER). Catalyzes the sequential condensation of isopentenyl pyrophosphate (IPP) with farnesyl pyrophosphate (FPP) to produce a polyprenyl pyrophosphate which contains 11 (major) and 12 (minor) isoprene units. This Giardia intestinalis (strain ATCC 50803 / WB clone C6) (Giardia lamblia) protein is Di-trans,poly-cis-undecaprenyl-diphosphate synthase.